We begin with the raw amino-acid sequence, 478 residues long: Crt homolog 3 (478 aa).

A disordered region spans residues 1-30; it reads MGSDERKPLLSINDGDDDFNHQDVSTKTPP. At 1–52 the chain is on the cytoplasmic side; it reads MGSDERKPLLSINDGDDDFNHQDVSTKTPPIKKESLSNKFKSFLKKSMTKET. Residues 53–73 traverse the membrane as a helical segment; that stretch reads LPILIYVLLYIISGVINVVLL. Residues 74-83 lie on the Vacuolar side of the membrane; it reads KKLMIKFVNY. A helical membrane pass occupies residues 84–104; sequence GFFLSQITNYGYLPIFLVAMW. Over 105–124 the chain is Cytoplasmic; that stretch reads YKMYCTSDVPKETRNFPQYK. Residues 125-145 form a helical membrane-spanning segment; the sequence is FVIMGLLDAINGFFVVIGGVS. The Vacuolar segment spans residues 146 to 149; sequence TSGP. A helical transmembrane segment spans residues 150 to 170; that stretch reads LQQLLNQAIIPFTMIASFIFL. Over 171–178 the chain is Cytoplasmic; it reads RERYSLFQ. A helical membrane pass occupies residues 179–199; sequence LGGAAVILGGVIVSLIPSLVG. Topologically, residues 200 to 205 are vacuolar; it reads GSSGGN. A helical membrane pass occupies residues 206-226; sequence ILFYNFFYLISVIPGALSNVY. At 227-237 the chain is on the cytoplasmic side; it reads KDIAFQSIDMD. A helical membrane pass occupies residues 238–258; the sequence is VWYLQFWDCLYQSLFGSILFP. The Vacuolar portion of the chain corresponds to 259-322; sequence VNNWLPPPAT…FVCDDCHNTW (64 aa). N-linked (GlcNAc...) asparagine glycosylation occurs at N296. A helical membrane pass occupies residues 323-343; sequence IIVLIYMTVNIAYNIFILLVL. The Cytoplasmic portion of the chain corresponds to 344–352; that stretch reads KHAGATVYS. The chain crosses the membrane as a helical span at residues 353–373; sequence IANTVILPLTNIFFSIHFIMG. At 374-376 the chain is on the vacuolar side; it reads AAT. A helical transmembrane segment spans residues 377 to 397; sequence TPFSALSVAGLLLILFGLGGY. Topologically, residues 398 to 478 are cytoplasmic; the sequence is RIGSMIKKPP…RYRATNIINN (81 aa). Residues 404–446 are disordered; that stretch reads KKPPPDSKKDSEQQGGEGGAGDGDSSDNKNNLGDSAEIPQQIQ. Basic and acidic residues predominate over residues 406–415; sequence PPPDSKKDSE.

It belongs to the CRT-like transporter family.

The protein localises to the vacuole membrane. In terms of biological role, nutrient transporter. Involved in maintaining the osmotic homeostasis of the digestive vacuole. In Dictyostelium discoideum (Social amoeba), this protein is Crt homolog 3 (crtp3).